The sequence spans 1421 residues: ALK tyrosine kinase receptor homolog scd-2 (1421 aa).

The N-terminal stretch at 1–20 is a signal peptide; sequence MRKRRLWWFVVLFRVTLVGA. Residues 21–903 lie on the Extracellular side of the membrane; sequence ILPNETFDVR…DTCEEIQIWT (883 aa). Residues Asn-24, Asn-44, Asn-70, Asn-83, Asn-119, and Asn-201 are each glycosylated (N-linked (GlcNAc...) asparagine). An LDL-receptor class A domain is found at 300-338; sequence QCSRGDQFLCSISANTRCLQNAQCDSRIDCDDESDEMDC. Intrachain disulfides connect Cys-301-Cys-317, Cys-309-Cys-329, and Cys-323-Cys-338. Positions 339–542 constitute an MAM domain; that stretch reads GNINGTMCDF…NLSFSPTCFE (204 aa). Residues Asn-342, Asn-362, Asn-495, Asn-533, Asn-546, Asn-633, Asn-726, Asn-793, Asn-849, Asn-873, and Asn-893 are each glycosylated (N-linked (GlcNAc...) asparagine). A helical membrane pass occupies residues 904–924; it reads LYNITFLIFAALTIIGALFVV. Over 925-1421 the chain is Cytoplasmic; it reads YHYRNREKQM…SVPLLECQTR (497 aa). In terms of domain architecture, Protein kinase spans 976 to 1261; that stretch reads IERGRVLGRG…GMPFPIHPAV (286 aa). Residues 982 to 990 and Lys-1003 contribute to the ATP site; that span reads LGRGNFGEV. The active-site Proton acceptor is Asp-1106.

This sequence belongs to the protein kinase superfamily. Tyr protein kinase family. Insulin receptor subfamily. In terms of assembly, interacts (via cytoplasmic domain) with fsn-1 (via SPRY domain). Expressed in AIA sensory neurons.

The protein localises to the cell membrane. It catalyses the reaction L-tyrosyl-[protein] + ATP = O-phospho-L-tyrosyl-[protein] + ADP + H(+). Its function is as follows. Probable tyrosine-protein kinase receptor which regulates the dauer/non-dauer developmental decision probably by controlling daf-3 transcriptional activity in parallel or together with the TGF-beta pathway. Regulates integration of conflicting sensory cues in AIA interneurons. May act as a receptor for hen-1. In AWA neurons, together with hen-1, plays a role in regulating olfactory adaptation by controlling the forgetting sensory responses to odorants such as diacetyl. The chain is ALK tyrosine kinase receptor homolog scd-2 from Caenorhabditis elegans.